Reading from the N-terminus, the 126-residue chain is Small ribosomal subunit protein uS12 (126 aa).

D89 is subject to 3-methylthioaspartic acid.

The protein belongs to the universal ribosomal protein uS12 family. As to quaternary structure, part of the 30S ribosomal subunit. Contacts proteins S8 and S17. May interact with IF1 in the 30S initiation complex.

Functionally, with S4 and S5 plays an important role in translational accuracy. Interacts with and stabilizes bases of the 16S rRNA that are involved in tRNA selection in the A site and with the mRNA backbone. Located at the interface of the 30S and 50S subunits, it traverses the body of the 30S subunit contacting proteins on the other side and probably holding the rRNA structure together. The combined cluster of proteins S8, S12 and S17 appears to hold together the shoulder and platform of the 30S subunit. This Polynucleobacter necessarius subsp. necessarius (strain STIR1) protein is Small ribosomal subunit protein uS12.